The chain runs to 654 residues: Mitochondrial-processing peptidase subunit alpha-1 (654 aa).

Positions 73 to 94 (SSSSYKGNNNNNNKLSYTTSSN) are disordered. Residues 381–446 (HKNHLKSQLQ…EQLELQQVKE (66 aa)) adopt a coiled-coil conformation.

Belongs to the peptidase M16 family. As to quaternary structure, heterodimer of alpha and beta subunits, forming the mitochondrial processing protease (MPP) in which subunit alpha is involved in substrate recognition and binding and subunit beta is the catalytic subunit.

It localises to the mitochondrion matrix. Its function is as follows. Substrate recognition and binding subunit of the essential mitochondrial processing protease (MPP), which cleaves the mitochondrial sequence off newly imported precursors proteins. This is Mitochondrial-processing peptidase subunit alpha-1 (mppA1) from Dictyostelium discoideum (Social amoeba).